Consider the following 250-residue polypeptide: MSLKILVPIKRVVDYAVKIRVKGDKSGVETANVKMSMNPFDEIAVEEAIRIKEKNLAKEIIAVSMGPKTSQETIRTAIAMGADKGIHVETTAELQPLSVAKLLKELVDKEKPNLIILGKQAIDDDCNQTAQMLAGLLNWPQATFASKVDIKDDSVHVTREIDGGLETLSMKLPAIISCDLRLNEPRYAKLQNIMKSKKAELKVETPESLNVDTNCNLKIISVEEPPKRSGGVKVESVENVVEALKKHALI.

Belongs to the ETF beta-subunit/FixA family. As to quaternary structure, heterodimer of an alpha and a beta subunit. FAD serves as cofactor. AMP is required as a cofactor.

It localises to the mitochondrion matrix. The electron transfer flavoprotein serves as a specific electron acceptor for several dehydrogenases, including five acyl-CoA dehydrogenases, glutaryl-CoA and sarcosine dehydrogenase. It transfers the electrons to the main mitochondrial respiratory chain via ETF-ubiquinone oxidoreductase (ETF dehydrogenase). This Dictyostelium discoideum (Social amoeba) protein is Electron transfer flavoprotein subunit beta (etfb).